We begin with the raw amino-acid sequence, 358 residues long: MLFHLFYPLASNLKILNIFKYLTFRTIYAMITALIVCFVLGPWIIRKLEGLQARQVIRTDGPESHLEKQGTPTMGGLIILTAIILPTLLWADLTNVYIWLTLFIIVGYGLIGFMDDYLKVVKKNTKGLSARQKMFWQVLLAGGVAVFLYVTPGFNEMLYVPFFKNFHPDLGIFFIPFVTLVIVGASNAVNLTDGLDGLAIGPVAINAATYMLFAYVAGHATLSAYLQIPRVVGAGELAVICGAMVGAGLGFLWFNSYPAEVFMGDVGSLSLGGTLGVIAVLTKQEILLVIVGGIFVIEALSVIFQVGSYKYRGKRIFRMAPIHHHFELKGVAEPKIIVRFWIITIILALVAISTLKMR.

10 helical membrane-spanning segments follow: residues 26-46, 71-91, 93-113, 134-154, 170-190, 197-217, 234-254, 261-281, 286-306, and 335-355; these read TIYAMITALIVCFVLGPWIIR, TPTMGGLIILTAIILPTLLWA, LTNVYIWLTLFIIVGYGLIGF, MFWQVLLAGGVAVFLYVTPGF, LGIFFIPFVTLVIVGASNAVN, GLAIGPVAINAATYMLFAYVA, AGELAVICGAMVGAGLGFLWF, VFMGDVGSLSLGGTLGVIAVL, ILLVIVGGIFVIEALSVIFQV, and KIIVRFWIITIILALVAISTL.

It belongs to the glycosyltransferase 4 family. MraY subfamily. Mg(2+) serves as cofactor.

The protein localises to the cell inner membrane. The catalysed reaction is UDP-N-acetyl-alpha-D-muramoyl-L-alanyl-gamma-D-glutamyl-meso-2,6-diaminopimeloyl-D-alanyl-D-alanine + di-trans,octa-cis-undecaprenyl phosphate = di-trans,octa-cis-undecaprenyl diphospho-N-acetyl-alpha-D-muramoyl-L-alanyl-D-glutamyl-meso-2,6-diaminopimeloyl-D-alanyl-D-alanine + UMP. Its pathway is cell wall biogenesis; peptidoglycan biosynthesis. Functionally, catalyzes the initial step of the lipid cycle reactions in the biosynthesis of the cell wall peptidoglycan: transfers peptidoglycan precursor phospho-MurNAc-pentapeptide from UDP-MurNAc-pentapeptide onto the lipid carrier undecaprenyl phosphate, yielding undecaprenyl-pyrophosphoryl-MurNAc-pentapeptide, known as lipid I. This chain is Phospho-N-acetylmuramoyl-pentapeptide-transferase, found in Trichlorobacter lovleyi (strain ATCC BAA-1151 / DSM 17278 / SZ) (Geobacter lovleyi).